Here is a 373-residue protein sequence, read N- to C-terminus: Geraniol dehydrogenase (373 aa).

Positions 47, 67, 96, 99, 102, 110, and 175 each coordinate Zn(2+).

This sequence belongs to the zinc-containing alcohol dehydrogenase family. As to quaternary structure, homodimer. Zn(2+) serves as cofactor.

It carries out the reaction (2E)-geraniol + NAD(+) = (2E)-geranial + NADH + H(+). It catalyses the reaction perillyl alcohol + NAD(+) = perillyl aldehyde + NADH + H(+). It functions in the pathway terpene metabolism; monoterpene degradation. Is inhibited by EDTA, N-ethylmaleimide, diethylpyrocarbonate, and 1-cyclohexyl-N-(2-morpholinoethyl)carbodiimide in vitro. In terms of biological role, involved in the degradation of the monoterpenes beta-myrcene and limonene. During anaerobic degradation of beta-myrcene, catalyzes the NAD(+)-dependent oxidation of geraniol to geranial. Can also catalyze the oxidation of (S)-perillyl alcohol to perillyl aldehyde, and to a lesser extent, the oxidation of nerol, citronellol, cumic alcohol, and benzyl alcohol. Cannot use NADP(+) instead of NAD(+) as cosubstrate. This Castellaniella defragrans (strain DSM 12143 / CCUG 39792 / 65Phen) (Alcaligenes defragrans) protein is Geraniol dehydrogenase.